Here is a 342-residue protein sequence, read N- to C-terminus: Tetraacyldisaccharide 4'-kinase (342 aa).

68 to 75 (TVGGTGKT) serves as a coordination point for ATP.

The protein belongs to the LpxK family.

The enzyme catalyses a lipid A disaccharide + ATP = a lipid IVA + ADP + H(+). It participates in glycolipid biosynthesis; lipid IV(A) biosynthesis; lipid IV(A) from (3R)-3-hydroxytetradecanoyl-[acyl-carrier-protein] and UDP-N-acetyl-alpha-D-glucosamine: step 6/6. In terms of biological role, transfers the gamma-phosphate of ATP to the 4'-position of a tetraacyldisaccharide 1-phosphate intermediate (termed DS-1-P) to form tetraacyldisaccharide 1,4'-bis-phosphate (lipid IVA). The protein is Tetraacyldisaccharide 4'-kinase of Burkholderia ambifaria (strain ATCC BAA-244 / DSM 16087 / CCUG 44356 / LMG 19182 / AMMD) (Burkholderia cepacia (strain AMMD)).